Reading from the N-terminus, the 339-residue chain is Photosystem II assembly lipoprotein Ycf48 (339 aa).

Residues 1-22 (MVIVKSWQKIFALLVVLLLCIG) form the signal peptide. C23 is lipidated: N-palmitoyl cysteine. A lipid anchor (S-diacylglycerol cysteine) is attached at C23.

The protein belongs to the Ycf48 family. Part of early PSII assembly complexes which includes D1 (psbA) and PsbI; not found in mature PSII. Binds to the lumenal side of PSII complexes. Interacts with YidC.

Its subcellular location is the cellular thylakoid membrane. In terms of biological role, a factor required for optimal assembly of photosystem II (PSII), acting in the early stages of PSII assembly. Also plays a role in replacement of photodamaged D1 (psbA). Assists YidC in synthesis of chlorophyll-binding proteins. In Trichormus variabilis (strain ATCC 29413 / PCC 7937) (Anabaena variabilis), this protein is Photosystem II assembly lipoprotein Ycf48.